A 254-amino-acid polypeptide reads, in one-letter code: DNA repair protein RecO (254 aa).

This sequence belongs to the RecO family.

In terms of biological role, involved in DNA repair and RecF pathway recombination. The polypeptide is DNA repair protein RecO (Gluconacetobacter diazotrophicus (strain ATCC 49037 / DSM 5601 / CCUG 37298 / CIP 103539 / LMG 7603 / PAl5)).